Here is a 199-residue protein sequence, read N- to C-terminus: Achaete-scute homolog 1 (199 aa).

Residues 37–56 are disordered; it reads PAEEQQASKAKPIKRQRSAS. The region spanning 81–133 is the bHLH domain; it reads AAVARRNERERNRVKLVNLGFATLREHVPNGAANKKMSKVETLRSAVEYIRAL. Residues 162 to 179 are compositionally biased toward polar residues; sequence HDMNSMAGSPVSSYSSDE. Residues 162-189 form a disordered region; sequence HDMNSMAGSPVSSYSSDEGSYDPLSPEE.

In terms of assembly, efficient DNA binding requires dimerization with another bHLH protein. In terms of tissue distribution, neuronal precursor cells.

The protein localises to the nucleus. Its function is as follows. Transcription factor that plays a key role in neuronal differentiation: acts as a pioneer transcription factor, accessing closed chromatin to allow other factors to bind and activate neural pathways. Directly binds the E box motif (5'-CANNTG-3') on promoters and promotes transcription of neuronal genes. The combination of three transcription factors, ASCL1, POU3F2/BRN2 and MYT1L, is sufficient to reprogram fibroblasts and other somatic cells into induced neuronal (iN) cells in vitro. The polypeptide is Achaete-scute homolog 1 (ascl1) (Xenopus laevis (African clawed frog)).